The sequence spans 234 residues: Ubiquitin domain-containing protein 2 (234 aa).

The interval 1–46 (MGGCVGAQHDSSGSLNENSDGTGVALGRNQPLKKEKPKWKSDYPMT) is disordered. Positions 9–21 (HDSSGSLNENSDG) are enriched in polar residues. Basic and acidic residues predominate over residues 32-41 (LKKEKPKWKS). The Ubiquitin-like domain occupies 152-227 (SQLRLRLSTG…VQVIVSQPVQ (76 aa)).

The protein resides in the cytoplasm. The protein is Ubiquitin domain-containing protein 2 (Ubtd2) of Mus musculus (Mouse).